The following is a 237-amino-acid chain: BTB/POZ domain-containing protein KCTD6 (237 aa).

In terms of domain architecture, BTB spans 12-81 (HPVTLNVGGH…LRTSELTLPV (70 aa)).

As to quaternary structure, homopentamer. May be part of a cullin-containing E3 ubiquitin-protein ligase complex.

The protein operates within protein modification; protein ubiquitination. Probable substrate-specific adapter of a cullin-containing E3 ubiquitin-protein ligase complex mediating the ubiquitination and subsequent proteasomal degradation of target proteins. The chain is BTB/POZ domain-containing protein KCTD6 (kctd6) from Danio rerio (Zebrafish).